Reading from the N-terminus, the 217-residue chain is Ribosomal RNA small subunit methyltransferase G (217 aa).

S-adenosyl-L-methionine is bound by residues Gly-74, Leu-79, 125–126 (IQ), and Arg-143.

The protein belongs to the methyltransferase superfamily. RNA methyltransferase RsmG family.

Its subcellular location is the cytoplasm. The enzyme catalyses guanosine(527) in 16S rRNA + S-adenosyl-L-methionine = N(7)-methylguanosine(527) in 16S rRNA + S-adenosyl-L-homocysteine. Functionally, specifically methylates the N7 position of guanine in position 527 of 16S rRNA. The polypeptide is Ribosomal RNA small subunit methyltransferase G (Syntrophotalea carbinolica (strain DSM 2380 / NBRC 103641 / GraBd1) (Pelobacter carbinolicus)).